Reading from the N-terminus, the 743-residue chain is MRPGLPPYLTVFTVYLLSHLPSQRYGADAASEALDPHAFHLLLNTYGRPIRFLRENTTQCTYNSSLRNSTVVRENAISFNFFQSYNQYYVFHMPRCLFAGPLAEQFLNQVDLTETLERYQQRLNTYALVSKDLASYRSFSQQLKAQDSLGQQPTTVPPPIDLSIPHVWMPPQTTPHDWKGSHTTSGLHRPHFNQTCILFDGHDLLFSTVTPCLHQGFYLMDELRYVKITLTEDFFVVTVSIDDDTPMLLIFGHLPRVLFKAPYQRDNFILRQTEKHELLVLVKKAQLNRHSYLKDSDFLDAALDFNYLDLSALLRNSFHRYAVDVLKSGRCQMLDRRTVEMAFAYALALFAAARQEEAGTEISIPRALDRQAALLQIQEFMITCLSQTPPRTTLLLYPTAVDLAKRALWTPDQITDITSLVRLVYILSKQNQQHLIPQWALRQIADFALQLHKTHLASFLSAFARQELYLMGSLVHSMLVHTTERREIFIVETGLCSLAELSHFTQLLAHPHHEYLSDLYTPCSSSGRRDHSLERLTRLFPDATVPATVPAALSILSTMQPSTLETFPDLFCLPLGESFSALTVSEHVSYVVTNQYLIKGISYPVSTTVVGQSLIITQTDSQTKCELTRNMHTTHSITAALNISLENCAFCQSALLEYDDTQGVINIMYMHDSDDVLFALDPYNEVVVSSPRTHYLMLLKNGTVLEVTDVVVDATDSRLLMMSVYALSAIIGIYLLYRMLKTC.

The signal sequence occupies residues Met-1–Gln-23. At Arg-24–Leu-720 the chain is on the virion surface side. Asn-56, Asn-63, Asn-68, and Asn-193 each carry an N-linked (GlcNAc...) asparagine; by host glycan. The interval Tyr-218–Leu-281 is interaction with gL. Asn-642 and Asn-701 each carry an N-linked (GlcNAc...) asparagine; by host glycan. The chain crosses the membrane as a helical span at residues Met-721–Lys-741. Over Thr-742–Cys-743 the chain is Intravirion.

Belongs to the herpesviridae glycoprotein H family. Interacts with glycoprotein L (gL); this interaction is necessary for the correct processing and cell surface expression of gH. The heterodimer gH/gL seems to interact with gB trimers during fusion. Forms the envelope pentamer complex (PC) composed of gH, gL, UL128, UL130, and UL131A. The pentamer interacts with host NRP2. Forms the envelope trimer complex composed of gH, gL, and gO. The trimer interacts with host PDGFRA. The trimer also interacts with host EPHA2. Interacts with UL116. In terms of processing, N-glycosylated, O-glycosylated, and sialylated.

It localises to the virion membrane. The protein localises to the host cell membrane. The protein resides in the host endosome membrane. Functionally, the heterodimer glycoprotein H-glycoprotein L is required for the fusion of viral and plasma membranes leading to virus entry into the host cell. Following initial binding to host receptor, membrane fusion is mediated by the fusion machinery composed of gB and the heterodimer gH/gL. May also be involved in the fusion between the virion envelope and the outer nuclear membrane during virion morphogenesis. In human cytomegalovirus, forms two distincts complexes to mediate viral entry, a trimer and a pentamer at the surface of the virion envelope. The gH-gL-gO trimer is required for infection in fibroblasts by interacting with host PDGFRA, and in glioblastoma cells by interacting with host EPHA2. The gH-gL-UL128-UL130-UL131A pentamer is essential for viral entry in epithelial, endothelial and myeloid cells via interaction with host NRP2. The sequence is that of Envelope glycoprotein H from Human cytomegalovirus (strain AD169) (HHV-5).